The sequence spans 298 residues: Acetylglutamate kinase (298 aa).

Residues 69-70 (GG), R91, and N191 contribute to the substrate site.

Belongs to the acetylglutamate kinase family. ArgB subfamily.

Its subcellular location is the cytoplasm. The enzyme catalyses N-acetyl-L-glutamate + ATP = N-acetyl-L-glutamyl 5-phosphate + ADP. It functions in the pathway amino-acid biosynthesis; L-arginine biosynthesis; N(2)-acetyl-L-ornithine from L-glutamate: step 2/4. Functionally, catalyzes the ATP-dependent phosphorylation of N-acetyl-L-glutamate. The polypeptide is Acetylglutamate kinase (Neisseria meningitidis serogroup C (strain 053442)).